The following is a 311-amino-acid chain: Olfactory receptor 1073 (311 aa).

Residues 1–25 (MKQQNDTQILQFLLLGLSENTELQP) are Extracellular-facing. N5 is a glycosylation site (N-linked (GlcNAc...) asparagine). The helical transmembrane segment at 26–46 (LIYWLFFSMYLVTVWGNLIII) threads the bilayer. The Cytoplasmic portion of the chain corresponds to 47 to 57 (LATVLDFRLHT). Residues 58–78 (AMYFFLCNLSFVDICLISTTI) form a helical membrane-spanning segment. The Extracellular portion of the chain corresponds to 79–97 (PKMLANVHLNHKAITYEGC). C97 and C179 are joined by a disulfide. A helical transmembrane segment spans residues 98–118 (IMQIYFFTLFVGLDNFLLAVM). At 119-133 (AYDRFVAICHPLRYT) the chain is on the cytoplasmic side. The helical transmembrane segment at 134–154 (SIMTPHLCMSLVLVSWIASVL) threads the bilayer. N-linked (GlcNAc...) asparagine glycosylation occurs at N155. Topologically, residues 155 to 196 (NSSLQSFLVLQLSFCTEVEIPHFFCELSMLVHLACSDTFLSD) are extracellular. The chain crosses the membrane as a helical span at residues 197–217 (MAMNVLAALLGGGCLVGILYS). Over 218 to 244 (YSKIVSSIQAISSAEGKYKAFSTCVSH) the chain is Cytoplasmic. Residues 245–265 (LSVVSLFYCTLLGVYLSSAVT) traverse the membrane as a helical segment. Over 266-271 (QNSHST) the chain is Extracellular. A helical transmembrane segment spans residues 272–292 (AATSLMYTVVTPMLNPFIYSL). Over 293 to 311 (RNDNIKRALKNFVKKKLEK) the chain is Cytoplasmic.

This sequence belongs to the G-protein coupled receptor 1 family. Tongue specific.

It localises to the cell membrane. Functionally, possible taste receptor. This is Olfactory receptor 1073 (Olr1073) from Rattus norvegicus (Rat).